Consider the following 1270-residue polypeptide: Microtubule-associated tumor suppressor 1 homolog (1270 aa).

Residues 1 to 14 (MTDDNSDDKIEDEL) are compositionally biased toward acidic residues. Disordered stretches follow at residues 1-50 (MTDD…NSAN), 183-217 (SFHTAGSLPPTGRRSGNTSSLSYSTWTSSHSDKMH), and 374-402 (TEDTQMVTKGKDSGTQNHTSELILSSPPG). Low complexity predominate over residues 39–50 (SSASSVNWNSAN). Position 186 is a phosphothreonine (T186). A compositionally biased stretch (low complexity) spans 200-211 (TSSLSYSTWTSS). Phosphoserine is present on residues S386, S399, and S443. The span at 386 to 396 (SGTQNHTSELI) shows a compositional bias: polar residues. Disordered stretches follow at residues 524 to 558 (DAALSKVTPRPQLTSASSPSSAISRQPTVLSRTPR) and 592 to 622 (THSKNASHRVPRTTSAVKSNQEDVDKASSSN). Residues 538–547 (SASSPSSAIS) show a composition bias toward low complexity. A Phosphoserine modification is found at S629. 3 stretches are compositionally biased toward polar residues: residues 701–710 (SKTTTTSGRN), 759–776 (VSSSGKPTSLKTAQSSWV), and 797–816 (TGSTPSIASTHSELSTYSNN). The tract at residues 701–816 (SKTTTTSGRN…HSELSTYSNN (116 aa)) is disordered. Positions 940–1231 (IQHLLSEREE…RLSMENEELL (292 aa)) form a coiled coil. S1203, S1224, S1245, S1255, S1259, S1261, S1264, and S1268 each carry phosphoserine. A disordered region spans residues 1237–1270 (GDLCSPKRSPTSSAIPFQSPRNSGSFPSPSISPR). A compositionally biased stretch (polar residues) spans 1244–1270 (RSPTSSAIPFQSPRNSGSFPSPSISPR).

It belongs to the MTUS1 family. As to quaternary structure, homodimer. Interacts with AGTR2. Interacts with PTPN6. Associates with microtubules.

The protein localises to the mitochondrion. It is found in the golgi apparatus. Its subcellular location is the cell membrane. The protein resides in the nucleus. Functionally, cooperates with AGTR2 to inhibit ERK2 activation and cell proliferation. May be required for AGTR2 cell surface expression. Together with PTPN6, induces UBE2V2 expression upon angiotensin-II stimulation. This is Microtubule-associated tumor suppressor 1 homolog (MTUS1) from Pongo abelii (Sumatran orangutan).